The primary structure comprises 458 residues: tRNA modification GTPase MnmE (458 aa).

The (6S)-5-formyl-5,6,7,8-tetrahydrofolate site is built by arginine 26, glutamate 88, and arginine 127. The region spanning 224–378 (GLSTAIIGRP…IEERINDIFF (155 aa)) is the TrmE-type G domain. Asparagine 234 contributes to the K(+) binding site. GTP-binding positions include 234-239 (NVGKSS), 253-259 (TDIEGTT), and 278-281 (DTAG). A Mg(2+)-binding site is contributed by serine 238. The K(+) site is built by threonine 253, isoleucine 255, and threonine 258. Threonine 259 lines the Mg(2+) pocket. Residue lysine 458 coordinates (6S)-5-formyl-5,6,7,8-tetrahydrofolate.

Belongs to the TRAFAC class TrmE-Era-EngA-EngB-Septin-like GTPase superfamily. TrmE GTPase family. As to quaternary structure, homodimer. Heterotetramer of two MnmE and two MnmG subunits. It depends on K(+) as a cofactor.

It localises to the cytoplasm. In terms of biological role, exhibits a very high intrinsic GTPase hydrolysis rate. Involved in the addition of a carboxymethylaminomethyl (cmnm) group at the wobble position (U34) of certain tRNAs, forming tRNA-cmnm(5)s(2)U34. The protein is tRNA modification GTPase MnmE of Streptococcus agalactiae serotype III (strain NEM316).